Consider the following 267-residue polypeptide: Urease accessory protein UreD (267 aa).

It belongs to the UreD family. UreD, UreF and UreG form a complex that acts as a GTP-hydrolysis-dependent molecular chaperone, activating the urease apoprotein by helping to assemble the nickel containing metallocenter of UreC. The UreE protein probably delivers the nickel.

It is found in the cytoplasm. Functionally, required for maturation of urease via the functional incorporation of the urease nickel metallocenter. This is Urease accessory protein UreD from Synechococcus sp. (strain JA-2-3B'a(2-13)) (Cyanobacteria bacterium Yellowstone B-Prime).